Consider the following 482-residue polypeptide: Serine carboxypeptidase-like 26 (482 aa).

Positions 1-28 (MAVAAAAAARRRDVSCLLLLLCFSSSMA) are cleaved as a signal peptide. Intrachain disulfides connect Cys-101–Cys-366, Cys-263–Cys-274, and Cys-298–Cys-333. The N-linked (GlcNAc...) asparagine glycan is linked to Asn-152. The active site involves Ser-194. 4 N-linked (GlcNAc...) asparagine glycosylation sites follow: Asn-269, Asn-301, Asn-354, and Asn-375. Active-site residues include Asp-403 and His-455.

The protein belongs to the peptidase S10 family.

It localises to the secreted. Acts as a positive regulator of grain size by controlling grain width, filling and weight. High expression of GS5 in the grain is correlated with large grain size. This chain is Serine carboxypeptidase-like 26, found in Oryza sativa subsp. japonica (Rice).